Here is a 466-residue protein sequence, read N- to C-terminus: Asparagine--tRNA ligase (466 aa).

It belongs to the class-II aminoacyl-tRNA synthetase family. As to quaternary structure, homodimer.

The protein resides in the cytoplasm. It carries out the reaction tRNA(Asn) + L-asparagine + ATP = L-asparaginyl-tRNA(Asn) + AMP + diphosphate + H(+). This Shewanella denitrificans (strain OS217 / ATCC BAA-1090 / DSM 15013) protein is Asparagine--tRNA ligase.